A 1518-amino-acid polypeptide reads, in one-letter code: Hormone receptor 4 (1518 aa).

5 disordered regions span residues 30-50 (RCSSDGESIADTSTSSPDLLA), 145-327 (TSST…KLSE), 380-587 (PSRI…QPQA), 672-820 (VGVG…SSVA), and 887-913 (SSNSTGLGGVGGGMGGRNLEAPHEPTD). Residues 34-46 (DGESIADTSTSSP) show a composition bias toward polar residues. 2 stretches are compositionally biased toward low complexity: residues 145 to 189 (TSST…SSSG) and 208 to 219 (SSSSAISAAAAS). Positions 238-260 (EGGGPAGDGSGATGGGNTSGGST) are enriched in gly residues. The span at 291–323 (STTTTTGRPTLTPTNGVLSSASAGTGISTGSSA) shows a compositional bias: low complexity. Residues 400–429 (QRERERERDRERDRERERERDRDREREREQ) are compositionally biased toward basic and acidic residues. 2 stretches are compositionally biased toward polar residues: residues 430–451 (SISSSQQHLSRVSASPPTQLSH) and 475–489 (RKSSPPTEHLLSQSM). 4 stretches are compositionally biased toward low complexity: residues 490–529 (QHLTQQQAIHLHHLLGQQQQQQQASHPQQQQQQQHSPHSL), 546–586 (HHQQ…QQPQ), 681–705 (GSVQCPSPHPSSSSSSSQLSPQTPS), and 738–799 (GQSH…PSSS). Composition is skewed to gly residues over residues 800–812 (SGGGSVSGGGVGG) and 892–902 (GLGGVGGGMGG). Residues 918–993 (PLVCMICEDK…QGMVLQAVRE (76 aa)) constitute a DNA-binding region (nuclear receptor). 2 consecutive NR C4-type zinc fingers follow at residues 921 to 941 (CMICEDKATGLHYGIITCEGC) and 957 to 976 (CVADGTCEITKAQRNRCQYC). Disordered regions lie at residues 1015-1101 (KHKK…AAVA), 1142-1210 (LLQA…LPPH), and 1341-1371 (KRRGEGGGSRHGSPASTPLSTPTGTPLSTPI). Positions 1021–1060 (QKQQQQAAQQQQQQAAAQQQHQQQQQHQQHQQHQQQQLHS) are enriched in low complexity. Positions 1061-1077 (PLHHHHHQGHQSHHAQQ) are enriched in basic residues. Composition is skewed to low complexity over residues 1078 to 1101 (QHHPQLSPHHLLSPQQQQLAAAVA) and 1144 to 1193 (QAPP…HHQQ). The span at 1194-1205 (QGGGGGGAGGGA) shows a compositional bias: gly residues. In terms of domain architecture, NR LBD spans 1250-1518 (HALGMIQTLI…PFVLNSASIR (269 aa)). The segment covering 1351–1368 (HGSPASTPLSTPTGTPLS) has biased composition (low complexity).

It belongs to the nuclear hormone receptor family. NR1 subfamily. In terms of tissue distribution, during L2 and L3 stages, strong constitutive expression is seen in the ring gland. Lower expression is detected in specific neurons of the central nervous system (CNS) (at protein level).

It localises to the nucleus. Coordinates growth and maturation by mediating endocrine responses to the attainment of critical weight during larval development. Plays a central role in the genetic cascades triggered by the steroid hormone ecdysone at the onset of metamorphosis, acting as both a repressor of the early ecdysone-induced regulatory genes and an inducer of the ftz-f1 midprepupal competence factor. This is Hormone receptor 4 (Hr4) from Drosophila melanogaster (Fruit fly).